Here is a 459-residue protein sequence, read N- to C-terminus: tRNA modification GTPase MnmE (459 aa).

(6S)-5-formyl-5,6,7,8-tetrahydrofolate-binding residues include arginine 23, glutamate 88, and arginine 127. In terms of domain architecture, TrmE-type G spans 223-381; that stretch reads GLSVVIVGKP…IKNCIKELFF (159 aa). A K(+)-binding site is contributed by asparagine 233. GTP is bound by residues 233–238, 252–258, and 277–280; these read NVGKSS, TDIPGTT, and DTAG. Serine 237 serves as a coordination point for Mg(2+). Threonine 252, isoleucine 254, and threonine 257 together coordinate K(+). Threonine 258 serves as a coordination point for Mg(2+). Lysine 459 is a binding site for (6S)-5-formyl-5,6,7,8-tetrahydrofolate.

This sequence belongs to the TRAFAC class TrmE-Era-EngA-EngB-Septin-like GTPase superfamily. TrmE GTPase family. As to quaternary structure, homodimer. Heterotetramer of two MnmE and two MnmG subunits. K(+) serves as cofactor.

It is found in the cytoplasm. Functionally, exhibits a very high intrinsic GTPase hydrolysis rate. Involved in the addition of a carboxymethylaminomethyl (cmnm) group at the wobble position (U34) of certain tRNAs, forming tRNA-cmnm(5)s(2)U34. This Clostridium kluyveri (strain ATCC 8527 / DSM 555 / NBRC 12016 / NCIMB 10680 / K1) protein is tRNA modification GTPase MnmE.